A 96-amino-acid polypeptide reads, in one-letter code: Large ribosomal subunit protein eL14 (96 aa).

Belongs to the eukaryotic ribosomal protein eL14 family.

The chain is Large ribosomal subunit protein eL14 from Desulfurococcus amylolyticus (strain DSM 18924 / JCM 16383 / VKM B-2413 / 1221n) (Desulfurococcus kamchatkensis).